The following is a 335-amino-acid chain: Acetyl-coenzyme A carboxylase carboxyl transferase subunit alpha (335 aa).

The CoA carboxyltransferase C-terminal domain occupies 48–308; sequence TLEKKVEALR…KGILIEELSA (261 aa).

It belongs to the AccA family. Acetyl-CoA carboxylase is a heterohexamer composed of biotin carboxyl carrier protein (AccB), biotin carboxylase (AccC) and two subunits each of ACCase subunit alpha (AccA) and ACCase subunit beta (AccD).

The protein resides in the cytoplasm. It carries out the reaction N(6)-carboxybiotinyl-L-lysyl-[protein] + acetyl-CoA = N(6)-biotinyl-L-lysyl-[protein] + malonyl-CoA. Its pathway is lipid metabolism; malonyl-CoA biosynthesis; malonyl-CoA from acetyl-CoA: step 1/1. Its function is as follows. Component of the acetyl coenzyme A carboxylase (ACC) complex. First, biotin carboxylase catalyzes the carboxylation of biotin on its carrier protein (BCCP) and then the CO(2) group is transferred by the carboxyltransferase to acetyl-CoA to form malonyl-CoA. The chain is Acetyl-coenzyme A carboxylase carboxyl transferase subunit alpha from Chlorobium phaeovibrioides (strain DSM 265 / 1930) (Prosthecochloris vibrioformis (strain DSM 265)).